The sequence spans 347 residues: Probable inactive UDP-arabinopyranose mutase 2 (347 aa).

A glycan (N-linked (Glc...) arginine) is linked at Arg-145.

Belongs to the RGP family. Heteromers with UAM1 and UAM3. Is not reversibly glycosylated in vitro by UDP-glucose, UDP-xylose and UDP-galactose.

The protein localises to the golgi apparatus. Its function is as follows. Probable inactive UDP-L-arabinose mutase. Inactive in vitro, but associates with UAM1 and UAM3. The chain is Probable inactive UDP-arabinopyranose mutase 2 from Oryza sativa subsp. japonica (Rice).